Reading from the N-terminus, the 450-residue chain is Phosphoglucosamine mutase (450 aa).

Ser-101 serves as the catalytic Phosphoserine intermediate. 4 residues coordinate Mg(2+): Ser-101, Asp-240, Asp-242, and Asp-244. Ser-101 carries the post-translational modification Phosphoserine.

This sequence belongs to the phosphohexose mutase family. It depends on Mg(2+) as a cofactor. In terms of processing, activated by phosphorylation.

It carries out the reaction alpha-D-glucosamine 1-phosphate = D-glucosamine 6-phosphate. Functionally, catalyzes the conversion of glucosamine-6-phosphate to glucosamine-1-phosphate. This chain is Phosphoglucosamine mutase, found in Streptococcus pneumoniae serotype 4 (strain ATCC BAA-334 / TIGR4).